Here is a 125-residue protein sequence, read N- to C-terminus: Ino eighty subunit 5 (125 aa).

Thr-124 carries the phosphothreonine modification.

As to quaternary structure, component of the chromatin-remodeling INO80 complex, at least composed of ARP4, ARP5, ARP8, RVB1, RVB2, TAF14, NHP10, IES1, IES3, IES4, IES6, ACT1, IES2, IES5 and INO80.

Its subcellular location is the nucleus. This chain is Ino eighty subunit 5 (IES5), found in Saccharomyces cerevisiae (strain ATCC 204508 / S288c) (Baker's yeast).